The sequence spans 173 residues: Coordinator of PRMT5 and differentiation stimulator (173 aa).

M1 carries the post-translational modification N-acetylmethionine. The tract at residues 1–70 (MDPQAATGRG…EGPSSEEEGF (70 aa)) is disordered. Phosphoserine occurs at positions 64 and 65.

As to quaternary structure, interacts with PRMT5. Interacts with histone H4; specifically interacts with the N-terminus of histone H4 but not with histone H3. Interacts with CBFB. Found in a complex with PRMT5, RUNX1 and CBFB.

The protein resides in the nucleus. In terms of biological role, histone-binding protein required for histone H4 methyltransferase activity of PRMT5. Specifically required for histone H4 'Arg-3' methylation mediated by PRMT5, but not histone H3 'Arg-8' methylation, suggesting that it modulates the substrate specificity of PRMT5. Specifically interacts with the N-terminus of histone H4 but not with histone H3, suggesting that it acts by promoting the association between histone H4 and PRMT5. Involved in CCNE1 promoter repression. Plays a role in muscle cell differentiation by modulating the recruitment of PRMT5 to the promoter of genes involved in the coordination between cell cycle exit and muscle differentiation. The protein is Coordinator of PRMT5 and differentiation stimulator (Coprs) of Mus musculus (Mouse).